A 536-amino-acid chain; its full sequence is MFEIFKKPLSRIVGATFAFAGVTLLACAMENGVAMAEGPTFQDVASQVFGQPVGPDNDGTLYIFGLTAKYTEPEYVDGRGPYKSFLKMLPSIRWYDPEHYWTNGSQTEGVFKNEECVLCHTVQTPTIVNDWKQSSHGSKDIRRGIGIKKDGKPVEDLVGCADCHGNNHQKLEMPTYKLCNDCHPKETAEHRAGGLGSHTHAYTVNVLEFSWHVGKPAEEVTGCAHCHAIAENRCSGCHTRHKFDPAEARKPTACRVCHMGIDHDEWAMYNTSIHGALYEAESARMDWGKKLKKGNYRVPTCAYCHMQNGDHNPQRFGTIYSDMGMFQVDRGAPKHKAKRDSWIKLCQDCHSPRFAADKLKEMDAGVNLSFTKWREAAAVIVGCYLDGVVDPMPEGSAPDWYGHYTFSLLPGGDPRFYATSNLERLGLEMICYLTGNVYKAYAHMSMYNQTYGNGSAFEQDRKLVEIKTEAAKLRRFAAIEKKIGLEHKSADFWKHGEYLDLLPGWKRKPGDVDVEWFKRTDIPHRANADAGVEIHH.

A signal peptide spans 1–26 (MFEIFKKPLSRIVGATFAFAGVTLLA). C116, C119, H120, H136, C160, C163, H164, H168, C179, C182, H183, H198, C223, C226, H227, C234, C237, H238, H241, C254, C257, and H258 together coordinate heme c. Residue H263 participates in hydroxylamine binding. Heme c contacts are provided by H274, C301, C304, H305, H311, C346, C349, H350, H443, and Y451.

In terms of assembly, homotrimer; subunits are linked by two covalent bonds between Tyr-451 of one subunit and heme P460 of an adjacent subunit. Requires heme c as cofactor.

Its subcellular location is the anammoxosome. It catalyses the reaction hydroxylamine + 3 Fe(III)-[cytochrome c] = nitric oxide + 3 Fe(II)-[cytochrome c] + 3 H(+). In terms of biological role, catalyzes the oxidation of hydroxylamine to nitric oxide with cytochrome c acting as an electron acceptor. Does not oxidize hydroxylamine to nitrite. Also able to catalyze the four-electron oxidation of hydrazine to N(2) in vitro with reduced efficiency; however, this reaction is probably not physiological. The protein is Hydroxylamine oxidoreductase of Kuenenia stuttgartiensis.